The chain runs to 426 residues: Histidine--tRNA ligase (426 aa).

The protein belongs to the class-II aminoacyl-tRNA synthetase family. In terms of assembly, homodimer.

Its subcellular location is the cytoplasm. It carries out the reaction tRNA(His) + L-histidine + ATP = L-histidyl-tRNA(His) + AMP + diphosphate + H(+). The polypeptide is Histidine--tRNA ligase (Picosynechococcus sp. (strain ATCC 27264 / PCC 7002 / PR-6) (Agmenellum quadruplicatum)).